The chain runs to 264 residues: Thymidylate synthase (264 aa).

Arginine 21 contributes to the dUMP binding site. Position 51 (histidine 51) interacts with (6R)-5,10-methylene-5,6,7,8-tetrahydrofolate. DUMP is bound at residue 126 to 127 (RR). Cysteine 146 acts as the Nucleophile in catalysis. DUMP-binding positions include 166-169 (RSCD), asparagine 177, and 207-209 (HLY). Aspartate 169 serves as a coordination point for (6R)-5,10-methylene-5,6,7,8-tetrahydrofolate. Alanine 263 contacts (6R)-5,10-methylene-5,6,7,8-tetrahydrofolate.

It belongs to the thymidylate synthase family. Bacterial-type ThyA subfamily. As to quaternary structure, homodimer.

Its subcellular location is the cytoplasm. It catalyses the reaction dUMP + (6R)-5,10-methylene-5,6,7,8-tetrahydrofolate = 7,8-dihydrofolate + dTMP. It functions in the pathway pyrimidine metabolism; dTTP biosynthesis. Its function is as follows. Catalyzes the reductive methylation of 2'-deoxyuridine-5'-monophosphate (dUMP) to 2'-deoxythymidine-5'-monophosphate (dTMP) while utilizing 5,10-methylenetetrahydrofolate (mTHF) as the methyl donor and reductant in the reaction, yielding dihydrofolate (DHF) as a by-product. This enzymatic reaction provides an intracellular de novo source of dTMP, an essential precursor for DNA biosynthesis. The protein is Thymidylate synthase of Salmonella arizonae (strain ATCC BAA-731 / CDC346-86 / RSK2980).